A 116-amino-acid polypeptide reads, in one-letter code: Venom nerve growth factor (116 aa).

Cystine bridges form between Cys-14–Cys-78, Cys-56–Cys-106, and Cys-66–Cys-108.

It belongs to the NGF-beta family. As to quaternary structure, homodimer; non-covalently linked. Not glycosylated. As to expression, expressed by the venom gland.

It is found in the secreted. Nerve growth factor is important for the development and maintenance of the sympathetic and sensory nervous systems. It stimulates division and differentiation of sympathetic and embryonic sensory neurons as well as basal forebrain cholinergic neurons in the brain. Its relevance in the snake venom is not clear. However, it has been shown to inhibit metalloproteinase-dependent proteolysis of platelet glycoprotein Ib alpha, suggesting a metalloproteinase inhibition to prevent metalloprotease autodigestion and/or protection against prey proteases. Binds a lipid between the two protein chains in the homodimer. The lipid-bound form promotes histamine relase from mouse mast cells, contrary to the lipid-free form. This chain is Venom nerve growth factor, found in Naja naja (Indian cobra).